Reading from the N-terminus, the 286-residue chain is Polyamine aminopropyltransferase (286 aa).

One can recognise a PABS domain in the interval 5-238; it reads TMWHETLHDQ…GIMTFAWATD (234 aa). Gln-33 serves as a coordination point for S-methyl-5'-thioadenosine. Spermidine-binding residues include His-64 and Asp-88. Residues Glu-108 and 140–141 each bind S-methyl-5'-thioadenosine; that span reads DG. Residue Asp-158 is the Proton acceptor of the active site. 158–161 lines the spermidine pocket; it reads DCTD. An S-methyl-5'-thioadenosine-binding site is contributed by Pro-165.

Belongs to the spermidine/spermine synthase family. In terms of assembly, homodimer or homotetramer.

It localises to the cytoplasm. The enzyme catalyses S-adenosyl 3-(methylsulfanyl)propylamine + putrescine = S-methyl-5'-thioadenosine + spermidine + H(+). Its pathway is amine and polyamine biosynthesis; spermidine biosynthesis; spermidine from putrescine: step 1/1. Its function is as follows. Catalyzes the irreversible transfer of a propylamine group from the amino donor S-adenosylmethioninamine (decarboxy-AdoMet) to putrescine (1,4-diaminobutane) to yield spermidine. This chain is Polyamine aminopropyltransferase, found in Salmonella paratyphi A (strain ATCC 9150 / SARB42).